The primary structure comprises 239 residues: ATP-dependent dethiobiotin synthetase BioD (239 aa).

15–20 (EIGKTF) contributes to the ATP binding site. Threonine 19 lines the Mg(2+) pocket. Lysine 40 is an active-site residue. Residues aspartate 57, 118-121 (EGVG), and 178-179 (NH) contribute to the ATP site. Mg(2+) is bound by residues aspartate 57 and glutamate 118.

Belongs to the dethiobiotin synthetase family. As to quaternary structure, homodimer. It depends on Mg(2+) as a cofactor.

The protein resides in the cytoplasm. The enzyme catalyses (7R,8S)-7,8-diammoniononanoate + CO2 + ATP = (4R,5S)-dethiobiotin + ADP + phosphate + 3 H(+). It functions in the pathway cofactor biosynthesis; biotin biosynthesis; biotin from 7,8-diaminononanoate: step 1/2. Its function is as follows. Catalyzes a mechanistically unusual reaction, the ATP-dependent insertion of CO2 between the N7 and N8 nitrogen atoms of 7,8-diaminopelargonic acid (DAPA, also called 7,8-diammoniononanoate) to form a ureido ring. The sequence is that of ATP-dependent dethiobiotin synthetase BioD from Burkholderia cenocepacia (strain HI2424).